The primary structure comprises 368 residues: Solute carrier family 35 member G1 (368 aa).

The next 10 helical transmembrane spans lie at 72–92 (GLGL…SLFV), 100–120 (AVEI…PCLI), 134–154 (LFLF…YYAF), 161–181 (DATV…WIFL), 190–210 (AFFT…PFIF), 225–245 (IKGT…LVIL), 256–276 (LSIW…LFVI), 289–309 (LFLI…TKAV), 316–336 (LVAI…IAFF), and 340–360 (PTWW…GATI). 2 EamA domains span residues 83–205 (FLFS…LIVR) and 236–360 (VLAA…GATI).

It belongs to the TMEM20 family. In terms of assembly, interacts with STIM1; stimulated by depletion of intracellular calcium. Interacts with ORAI1. Interacts with the plasma membrane calcium-transporting ATPases ATP2B1 and ATP2B4. Interacts with ATP1A1, ATP2A2, KPNB1 and XPO1.

It localises to the cell membrane. The protein localises to the endoplasmic reticulum membrane. Functionally, may play a role in intracellular calcium sensing and homeostasis. May act as a negative regulator of plasma membrane calcium-transporting ATPases preventing calcium efflux from the cell. This chain is Solute carrier family 35 member G1 (Slc35g1), found in Mus musculus (Mouse).